Reading from the N-terminus, the 372-residue chain is Signal peptide peptidase-like 1 (372 aa).

At 1–6 (METLWT) the chain is on the lumenal side. A helical transmembrane segment spans residues 7 to 27 (LLYLLEPAPATLIVTAVTVTF). Residues 28-54 (ASAFRALNYGKEMERNRDFSEASITLD) lie on the Cytoplasmic side of the membrane. The chain crosses the membrane as a helical span at residues 55 to 77 (SSQALMIPVMSSCSLLLMFYLFS). Residues 78–81 (SVSQ) are Lumenal-facing. The helical transmembrane segment at 82–104 (LLTAFTAIASVSSLFYWLSPYAV) threads the bilayer. Residues 105 to 123 (YMKTQLGLSDPFLSRCCSK) are Cytoplasmic-facing. The chain crosses the membrane as a helical span at residues 124-146 (SFTRIQGLLLVACAMTVVAWLIS). Residues 147–149 (GHW) are Lumenal-facing. The chain crosses the membrane as a helical span at residues 150–167 (VLNNLLGISICIAFVSHV). The Cytoplasmic portion of the chain corresponds to 168–171 (RLPN). A helical transmembrane segment spans residues 172-192 (IKICAMLLVCLFVYDIFWVFF). The active site involves Asp186. The Lumenal portion of the chain corresponds to 193 to 257 (SERFFGANVM…GVVPGVSASD (65 aa)). Residues 258–278 (FMMLGLGDMAIPAMLLALVLC) form a helical membrane-spanning segment. Asp265 is an active-site residue. At 279-301 (FDHRKTRDVVNIFDLKSSKGHKY) the chain is on the cytoplasmic side. The helical transmembrane segment at 302–322 (IWYALPGYAIGLVAALAAGVL) threads the bilayer. Topologically, residues 323–325 (THS) are lumenal. The helical transmembrane segment at 326–346 (PQPALLYLVPSTLGPVIFMSW) threads the bilayer. Positions 328–330 (PAL) match the PAL motif. Over 347 to 372 (RRKDLAELWEGPALSNPIEKSHEIEI) the chain is Cytoplasmic.

It belongs to the peptidase A22B family. In terms of tissue distribution, ubiquitous.

It is found in the endosome membrane. Intramembrane-cleaving aspartic protease (I-CLiP) that cleaves type II membrane signal peptides in the hydrophobic plane of the membrane. This is Signal peptide peptidase-like 1 (SPPL1) from Arabidopsis thaliana (Mouse-ear cress).